Here is a 338-residue protein sequence, read N- to C-terminus: Lipoate-protein ligase A (338 aa).

The 188-residue stretch at 29 to 216 (PATQRVLFLW…AFFAHYGERI (188 aa)) folds into the BPL/LPL catalytic domain. ATP-binding positions include R71, 76–79 (GAVF), and K134. Position 134 (K134) interacts with (R)-lipoate.

This sequence belongs to the LplA family. As to quaternary structure, monomer.

The protein resides in the cytoplasm. It carries out the reaction L-lysyl-[lipoyl-carrier protein] + (R)-lipoate + ATP = N(6)-[(R)-lipoyl]-L-lysyl-[lipoyl-carrier protein] + AMP + diphosphate + H(+). The protein operates within protein modification; protein lipoylation via exogenous pathway; protein N(6)-(lipoyl)lysine from lipoate: step 1/2. Its pathway is protein modification; protein lipoylation via exogenous pathway; protein N(6)-(lipoyl)lysine from lipoate: step 2/2. Catalyzes both the ATP-dependent activation of exogenously supplied lipoate to lipoyl-AMP and the transfer of the activated lipoyl onto the lipoyl domains of lipoate-dependent enzymes. This is Lipoate-protein ligase A from Salmonella typhi.